The primary structure comprises 95 residues: Co-chaperonin GroES (95 aa).

It belongs to the GroES chaperonin family. In terms of assembly, heptamer of 7 subunits arranged in a ring. Interacts with the chaperonin GroEL.

It is found in the cytoplasm. In terms of biological role, together with the chaperonin GroEL, plays an essential role in assisting protein folding. The GroEL-GroES system forms a nano-cage that allows encapsulation of the non-native substrate proteins and provides a physical environment optimized to promote and accelerate protein folding. GroES binds to the apical surface of the GroEL ring, thereby capping the opening of the GroEL channel. The protein is Co-chaperonin GroES of Cereibacter sphaeroides (strain KD131 / KCTC 12085) (Rhodobacter sphaeroides).